Here is a 149-residue protein sequence, read N- to C-terminus: Secreted RxLR effector protein 3 (149 aa).

Residues 1–23 (MRASTILFVLGAAILAVIGVTTA) form the signal peptide. Residues 38 to 53 (RLLRSGSMEQEPDEER) carry the RxLR-dEER motif.

It belongs to the RxLR effector family.

It is found in the secreted. It localises to the host nucleus. The protein localises to the host cytoplasm. Its function is as follows. Secreted effector that completely suppresses the host cell death induced by cell death-inducing proteins. The protein is Secreted RxLR effector protein 3 of Plasmopara viticola (Downy mildew of grapevine).